A 412-amino-acid polypeptide reads, in one-letter code: Maintenance of mitochondrial morphology protein 1 (412 aa).

Topologically, residues 1 to 19 are lumenal; sequence MAQDVCPTRSEPSLSFLQG. Residues 20-40 form a helical membrane-spanning segment; the sequence is LILGQLSVVLLIAAFIKFFIF. Residues 41–412 lie on the Cytoplasmic side of the membrane; the sequence is GEAPSAEETA…GSLPGIDMPT (372 aa). The 217-residue stretch at 121–337 folds into the SMP-LTD domain; that stretch reads QPESLDWFNV…EPRFQEIELP (217 aa). A compositionally biased stretch (basic and acidic residues) spans 372 to 384; it reads ARQELDTETDGLR. The tract at residues 372-412 is disordered; sequence ARQELDTETDGLRYRRRPVGDDTYSVSGSMPGSLPGIDMPT.

Belongs to the MMM1 family. Homodimer. Component of the ER-mitochondria encounter structure (ERMES) or MDM complex, composed of MMM1, MDM10, MDM12 and MDM34. An MMM1 homodimer associates with one molecule of MDM12 on each side in a pairwise head-to-tail manner, and the SMP-LTD domains of MMM1 and MDM12 generate a continuous hydrophobic tunnel for phospholipid trafficking.

It localises to the endoplasmic reticulum membrane. Functionally, component of the ERMES/MDM complex, which serves as a molecular tether to connect the endoplasmic reticulum (ER) and mitochondria. Components of this complex are involved in the control of mitochondrial shape and protein biogenesis, and function in nonvesicular lipid trafficking between the ER and mitochondria. The MDM12-MMM1 subcomplex functions in the major beta-barrel assembly pathway that is responsible for biogenesis of all outer membrane beta-barrel proteins, and acts in a late step after the SAM complex. The MDM10-MDM12-MMM1 subcomplex further acts in the TOM40-specific pathway after the action of the MDM12-MMM1 complex. Essential for establishing and maintaining the structure of mitochondria and maintenance of mtDNA nucleoids. This Podospora anserina (strain S / ATCC MYA-4624 / DSM 980 / FGSC 10383) (Pleurage anserina) protein is Maintenance of mitochondrial morphology protein 1.